Reading from the N-terminus, the 250-residue chain is uncharacterized protein (250 aa).

A Glycyl lysine isopeptide (Lys-Gly) (interchain with G-Cter in ubiquitin) cross-link involves residue Lys17. The tract at residues 30–67 (REEDYVATSKDNIHHHPCDWSAKPSQRQNENEQKSTIR) is disordered.

This is an uncharacterized protein from Saccharomyces cerevisiae (strain ATCC 204508 / S288c) (Baker's yeast).